The following is a 610-amino-acid chain: Elongation factor 4 (610 aa).

One can recognise a tr-type G domain in the interval 14–198; that stretch reads ANIRNFSIVA…AIVTRLPPPQ (185 aa). GTP contacts are provided by residues 26-31 and 145-148; these read DHGKST and NKVD.

It belongs to the TRAFAC class translation factor GTPase superfamily. Classic translation factor GTPase family. LepA subfamily.

It localises to the cell inner membrane. It carries out the reaction GTP + H2O = GDP + phosphate + H(+). Required for accurate and efficient protein synthesis under certain stress conditions. May act as a fidelity factor of the translation reaction, by catalyzing a one-codon backward translocation of tRNAs on improperly translocated ribosomes. Back-translocation proceeds from a post-translocation (POST) complex to a pre-translocation (PRE) complex, thus giving elongation factor G a second chance to translocate the tRNAs correctly. Binds to ribosomes in a GTP-dependent manner. This chain is Elongation factor 4, found in Nitrobacter hamburgensis (strain DSM 10229 / NCIMB 13809 / X14).